The chain runs to 291 residues: UDP-N-acetylenolpyruvoylglucosamine reductase (291 aa).

Positions 19–186 (GIGGPAEWIA…VSARLKLASG (168 aa)) constitute an FAD-binding PCMH-type domain. Arg165 is a catalytic residue. The Proton donor role is filled by Ser215. Glu285 is a catalytic residue.

This sequence belongs to the MurB family. FAD is required as a cofactor.

The protein resides in the cytoplasm. It catalyses the reaction UDP-N-acetyl-alpha-D-muramate + NADP(+) = UDP-N-acetyl-3-O-(1-carboxyvinyl)-alpha-D-glucosamine + NADPH + H(+). The protein operates within cell wall biogenesis; peptidoglycan biosynthesis. Cell wall formation. This chain is UDP-N-acetylenolpyruvoylglucosamine reductase, found in Prochlorococcus marinus (strain NATL2A).